The primary structure comprises 925 residues: Calpain-B (925 aa).

The region spanning methionine 259–serine 558 is the Calpain catalytic domain. Active-site residues include cysteine 314, histidine 470, and asparagine 498. Positions proline 559 to aspartate 728 are domain III. A disordered region spans residues methionine 723 to aspartate 753. Residues glutamate 729–proline 748 form a linker region. The domain IV stretch occupies residues lysine 749 to serine 925. 2 consecutive EF-hand domains span residues phenylalanine 796 to tryptophan 831 and threonine 826 to histidine 861. Aspartate 809, aspartate 811, serine 813, arginine 815, glutamate 820, aspartate 839, threonine 843, serine 845, and histidine 850 together coordinate Ca(2+).

The protein belongs to the peptidase C2 family. Post-translationally, undergoes calcium-dependent autolytic cleavage between Asn-74 and Ala-75 and between Gln-224 and Asn-225 to produce two major products, calpain B catalytic subunit 1 and calpain B catalytic subunit 2. This autolysis is necessary for activation of the protein. In terms of tissue distribution, strongly expressed in follicular and border cells of the oocyte. Ubiquitously expressed in early embryos. Localized to the trachea and their orifices, and to the larynx of late embryos. Restricted to the salivary gland in third instar larvae.

The protein resides in the cytoplasm. The protein localises to the membrane. Activated by millimolar concentrations of calcium. Functionally, calcium-regulated non-lysosomal thiol-protease. The polypeptide is Calpain-B (Drosophila melanogaster (Fruit fly)).